Reading from the N-terminus, the 192-residue chain is 3-isopropylmalate dehydratase small subunit (192 aa).

It belongs to the LeuD family. LeuD type 1 subfamily. As to quaternary structure, heterodimer of LeuC and LeuD.

The enzyme catalyses (2R,3S)-3-isopropylmalate = (2S)-2-isopropylmalate. It functions in the pathway amino-acid biosynthesis; L-leucine biosynthesis; L-leucine from 3-methyl-2-oxobutanoate: step 2/4. Functionally, catalyzes the isomerization between 2-isopropylmalate and 3-isopropylmalate, via the formation of 2-isopropylmaleate. This chain is 3-isopropylmalate dehydratase small subunit, found in Oceanobacillus iheyensis (strain DSM 14371 / CIP 107618 / JCM 11309 / KCTC 3954 / HTE831).